The following is a 264-amino-acid chain: Carbonic anhydrase (264 aa).

Residues 1 to 33 (MSSTLYRRQLLKLLGMSVLGTSFSSCVTSPARA) constitute a signal peptide (tat-type signal). Residues 36–264 (VNWGYIGKVG…LNDRLVIEAI (229 aa)) enclose the Alpha-carbonic anhydrase domain. H127, H129, and H146 together coordinate Zn(2+). Position 214-215 (214-215 (TT)) interacts with substrate.

This sequence belongs to the alpha-carbonic anhydrase family. Zn(2+) serves as cofactor. Predicted to be exported by the Tat system. The position of the signal peptide cleavage has not been experimentally proven.

The enzyme catalyses hydrogencarbonate + H(+) = CO2 + H2O. Its function is as follows. Reversible hydration of carbon dioxide. This chain is Carbonic anhydrase (ecaA), found in Nostoc sp. (strain PCC 7120 / SAG 25.82 / UTEX 2576).